A 384-amino-acid polypeptide reads, in one-letter code: Monomethylxanthine methyltransferase 2 (384 aa).

Residues Tyr18, Cys61, Asn66, Asp100, Leu101, Ser139, Phe140, and Cys156 each coordinate S-adenosyl-L-homocysteine. Theobromine contacts are provided by Tyr157, His160, and Trp161. 3 residues coordinate Mg(2+): Asn178, Phe262, and Asn263. Tyr368 serves as a coordination point for theobromine.

The protein belongs to the methyltransferase superfamily. Type-7 methyltransferase family. Mg(2+) serves as cofactor. In terms of tissue distribution, expressed, at low levels, in young leaves, floral buds and immature fruits (grains), but not in old leaves and mature fruits. Highly expressed in developing endosperm and flower buds. Detected in young leaves.

It catalyses the reaction 7-methylxanthine + S-adenosyl-L-methionine = theobromine + S-adenosyl-L-homocysteine + H(+). The protein operates within alkaloid biosynthesis. Functionally, involved in the biosynthesis of caffeine. Catalyzes the conversion of 7-methylxanthine (7mX) to theobromine and with a lower activity of paraxanthine to caffeine. Does not have 1-N-methylation activity. The sequence is that of Monomethylxanthine methyltransferase 2 from Coffea arabica (Arabian coffee).